A 353-amino-acid polypeptide reads, in one-letter code: Inactive ubiquitin thioesterase OTULINL (353 aa).

The tract at residues 1–80 (MKATRSAPRE…KWWIGYLQRK (80 aa)) is required for membrane binding. The region spanning 125–353 (KCVRPVKRDN…NDHQYHIPVF (229 aa)) is the OTU domain.

Belongs to the peptidase C65 family. Otulin subfamily. In terms of assembly, does not bind ubiquitin or ubiquitin-like proteins.

The protein resides in the cytoplasm. It is found in the endoplasmic reticulum membrane. Its subcellular location is the nucleus envelope. In terms of biological role, lacks deubiquitinase activity. The protein is Inactive ubiquitin thioesterase OTULINL of Rattus norvegicus (Rat).